A 241-amino-acid chain; its full sequence is Dihydropteridine reductase (241 aa).

11-35 serves as a coordination point for NADP(+); that stretch reads LVYGGRGALGSRCVQAFRARNWWVA. Lys-70, Lys-76, Lys-93, and Lys-99 each carry N6-succinyllysine. Tyr-147 acts as the Proton acceptor in catalysis. At Ser-170 the chain carries Phosphoserine.

This sequence belongs to the short-chain dehydrogenases/reductases (SDR) family. In terms of assembly, homodimer.

The catalysed reaction is 5,6,7,8-tetrahydropteridine + NAD(+) = 6,7-dihydropteridine + NADH + H(+). It carries out the reaction 5,6,7,8-tetrahydropteridine + NADP(+) = 6,7-dihydropteridine + NADPH + H(+). Catalyzes the conversion of quinonoid dihydrobiopterin into tetrahydrobiopterin. The polypeptide is Dihydropteridine reductase (Qdpr) (Rattus norvegicus (Rat)).